Reading from the N-terminus, the 307-residue chain is Pantothenate kinase (307 aa).

87 to 94 (GSVAVGKS) is a binding site for ATP.

This sequence belongs to the prokaryotic pantothenate kinase family.

The protein localises to the cytoplasm. The enzyme catalyses (R)-pantothenate + ATP = (R)-4'-phosphopantothenate + ADP + H(+). The protein operates within cofactor biosynthesis; coenzyme A biosynthesis; CoA from (R)-pantothenate: step 1/5. The chain is Pantothenate kinase from Vibrio vulnificus (strain YJ016).